We begin with the raw amino-acid sequence, 471 residues long: UDP-glycosyltransferase 71A15 (471 aa).

Residues Ser282, 348-349 (WA), 366-374 (HCGWNSTLE), and 388-391 (YAEQ) contribute to the UDP-alpha-D-glucose site.

Belongs to the UDP-glycosyltransferase family.

Glycosyltransferase that possesses chalcone and flavonol 2'-O-glycosyltransferase activity. Converts phloretin to phlorizin (phloretin 2'-O-glucoside), a potent antioxidant. Possesses glycosyltransferase activity toward, naringenin, naringenin chalcone, eriodictyol, eriodictyol chalcone, apigenin, luteolin, kaempferol, quercetin, isoliquiritigenin, butein and caffeic acid. Can convert phloretin to phloretin 4'-O-glucoside and phloretin 4-O-glucoside. This chain is UDP-glycosyltransferase 71A15, found in Malus domestica (Apple).